The chain runs to 203 residues: Large ribosomal subunit protein eL15 (203 aa).

The disordered stretch occupies residues 160–186; the sequence is ESRGLTSTGKRSRGLNKGHRYNKTRAG. Over residues 169–186 the composition is skewed to basic residues; sequence KRSRGLNKGHRYNKTRAG.

Belongs to the eukaryotic ribosomal protein eL15 family. In terms of assembly, component of the large ribosomal subunit (LSU). Mature N.crassa ribosomes consist of a small (40S) and a large (60S) subunit. The 40S small subunit contains 1 molecule of ribosomal RNA (18S rRNA) and at least 32 different proteins. The large 60S subunit contains 3 rRNA molecules (26S, 5.8S and 5S rRNA) and at least 42 different proteins.

It localises to the cytoplasm. Functionally, component of the ribosome, a large ribonucleoprotein complex responsible for the synthesis of proteins in the cell. The small ribosomal subunit (SSU) binds messenger RNAs (mRNAs) and translates the encoded message by selecting cognate aminoacyl-transfer RNA (tRNA) molecules. The large subunit (LSU) contains the ribosomal catalytic site termed the peptidyl transferase center (PTC), which catalyzes the formation of peptide bonds, thereby polymerizing the amino acids delivered by tRNAs into a polypeptide chain. The nascent polypeptides leave the ribosome through a tunnel in the LSU and interact with protein factors that function in enzymatic processing, targeting, and the membrane insertion of nascent chains at the exit of the ribosomal tunnel. This is Large ribosomal subunit protein eL15 (rpl-15) from Neurospora crassa (strain ATCC 24698 / 74-OR23-1A / CBS 708.71 / DSM 1257 / FGSC 987).